We begin with the raw amino-acid sequence, 126 residues long: NADPH-dependent 7-cyano-7-deazaguanine reductase (126 aa).

The active-site Thioimide intermediate is the C40. Catalysis depends on D47, which acts as the Proton donor. Substrate-binding positions include 62–64 and 81–82; these read IEL and HE.

This sequence belongs to the GTP cyclohydrolase I family. QueF type 1 subfamily.

It localises to the cytoplasm. The catalysed reaction is 7-aminomethyl-7-carbaguanine + 2 NADP(+) = 7-cyano-7-deazaguanine + 2 NADPH + 3 H(+). The protein operates within tRNA modification; tRNA-queuosine biosynthesis. Functionally, catalyzes the NADPH-dependent reduction of 7-cyano-7-deazaguanine (preQ0) to 7-aminomethyl-7-deazaguanine (preQ1). The protein is NADPH-dependent 7-cyano-7-deazaguanine reductase of Campylobacter jejuni subsp. doylei (strain ATCC BAA-1458 / RM4099 / 269.97).